We begin with the raw amino-acid sequence, 513 residues long: MQLNSTEISDLIKQRIEQFEVVSESRNEGTIVAVSDGIIRIHGLADVMQGEMIELPGSRFAIALNLERDSVGAVVMGPYADLAEGVKVKTTGRILEVPVGRGLLGRVVNTLGEPIDGKGAIDNDGFSPVEVIAPGVIERKSVDQPVQTGYKAVDAMIPIGRGQRELIIGDRQTGKTAMAIDAIINQRDSGIKCVYVAVGQKASTIANVVRKLEEHGALANTIVVVATASEAAALQYLAPYSGCAMGEYFRDRGEDALIVYDDLSKQAVAYRQISLLLKRPPGREAYPGDVFYLHSRLLERASRVNEEYVEKFTKGAVTGKTGSLTALPIIETQAGDVSAFVPTNVISITDGQIFLETDLFNSGLRPAVNPGISVSRVGGAAQTKIIKKLSGGIRTALAQYRELAAFSQFASDLDDATRAQLEHGVRVTELMKQKQYAPMSVAAQAVSIFAAEKGYLKGVELKKVGDFEAALLSYMNSEHAALIKLINETGDYNADIEAELKAGLDKFVATQTW.

169 to 176 (GDRQTGKT) lines the ATP pocket.

It belongs to the ATPase alpha/beta chains family. F-type ATPases have 2 components, CF(1) - the catalytic core - and CF(0) - the membrane proton channel. CF(1) has five subunits: alpha(3), beta(3), gamma(1), delta(1), epsilon(1). CF(0) has three main subunits: a(1), b(2) and c(9-12). The alpha and beta chains form an alternating ring which encloses part of the gamma chain. CF(1) is attached to CF(0) by a central stalk formed by the gamma and epsilon chains, while a peripheral stalk is formed by the delta and b chains.

It is found in the cell inner membrane. The catalysed reaction is ATP + H2O + 4 H(+)(in) = ADP + phosphate + 5 H(+)(out). Produces ATP from ADP in the presence of a proton gradient across the membrane. The alpha chain is a regulatory subunit. This is ATP synthase subunit alpha from Shewanella oneidensis (strain ATCC 700550 / JCM 31522 / CIP 106686 / LMG 19005 / NCIMB 14063 / MR-1).